A 267-amino-acid chain; its full sequence is 4-diphosphocytidyl-2-C-methyl-D-erythritol kinase (267 aa).

Residue Lys-8 is part of the active site. 90-100 (PIGAGLGGGSS) serves as a coordination point for ATP. Residue Asp-132 is part of the active site.

The protein belongs to the GHMP kinase family. IspE subfamily.

The catalysed reaction is 4-CDP-2-C-methyl-D-erythritol + ATP = 4-CDP-2-C-methyl-D-erythritol 2-phosphate + ADP + H(+). It functions in the pathway isoprenoid biosynthesis; isopentenyl diphosphate biosynthesis via DXP pathway; isopentenyl diphosphate from 1-deoxy-D-xylulose 5-phosphate: step 3/6. Catalyzes the phosphorylation of the position 2 hydroxy group of 4-diphosphocytidyl-2C-methyl-D-erythritol. The sequence is that of 4-diphosphocytidyl-2-C-methyl-D-erythritol kinase from Azobacteroides pseudotrichonymphae genomovar. CFP2.